A 1108-amino-acid chain; its full sequence is Retinal guanylyl cyclase 1 (1108 aa).

A signal peptide spans Met-1–Ser-54. Over Ala-55–Glu-465 the chain is Extracellular. An intrachain disulfide couples Cys-108 to Cys-136. Asn-300 carries an N-linked (GlcNAc...) asparagine glycan. A helical transmembrane segment spans residues Pro-466–Leu-490. A Protein kinase domain is found at Arg-491–Ile-811. The Cytoplasmic segment spans residues Arg-491–Lys-1108. In terms of domain architecture, Guanylate cyclase spans Thr-883–Glu-1013. The tract at residues Ile-1069–Lys-1108 is disordered.

This sequence belongs to the adenylyl cyclase class-4/guanylyl cyclase family. In terms of assembly, homodimer; requires homodimerization for guanylyl cyclase activity. Interacts (via C-terminus) with RD3 (via C-terminus); promotes the exit of GUCY2E from the endoplasmic reticulum and its trafficking to the photoreceptor outer segments. Interaction with RD3 negatively regulates GUCY2E guanylate cyclase activity. There are 9 conserved cysteine residues in sensory guanylate cyclases, 6 in the extracellular domain, which may be involved in intra- or interchain disulfide bonds.

It is found in the photoreceptor outer segment membrane. The protein localises to the endoplasmic reticulum membrane. It catalyses the reaction GTP = 3',5'-cyclic GMP + diphosphate. With respect to regulation, activated by GUCA1A when free calcium ions concentration is low, and inhibited by GUCA1A when free calcium ions concentration is high. Negatively regulated by RD3; RD3 inhibits the basal and GUCA1A-stimulated guanylate cyclase activity. Its function is as follows. Catalyzes the synthesis of cyclic GMP (cGMP) in rods and cones of photoreceptors. Plays an essential role in phototransduction, by mediating cGMP replenishment. May also participate in the trafficking of membrane-asociated proteins to the photoreceptor outer segment membrane. The protein is Retinal guanylyl cyclase 1 (Gucy2e) of Mus musculus (Mouse).